Here is a 423-residue protein sequence, read N- to C-terminus: D-tagatose-1,6-bisphosphate aldolase subunit GatZ (423 aa).

The protein belongs to the GatZ/KbaZ family. GatZ subfamily. As to quaternary structure, forms a complex with GatY.

It participates in carbohydrate metabolism; D-tagatose 6-phosphate degradation; D-glyceraldehyde 3-phosphate and glycerone phosphate from D-tagatose 6-phosphate: step 2/2. Its function is as follows. Component of the tagatose-1,6-bisphosphate aldolase GatYZ that is required for full activity and stability of the Y subunit. Could have a chaperone-like function for the proper and stable folding of GatY. When expressed alone, GatZ does not show any aldolase activity. Is involved in the catabolism of galactitol. This is D-tagatose-1,6-bisphosphate aldolase subunit GatZ from Salmonella paratyphi B (strain ATCC BAA-1250 / SPB7).